The primary structure comprises 449 residues: Phosphoglucosamine mutase (449 aa).

The active-site Phosphoserine intermediate is S100. Mg(2+)-binding residues include S100, D240, D242, and D244. S100 carries the post-translational modification Phosphoserine.

The protein belongs to the phosphohexose mutase family. Mg(2+) is required as a cofactor. Activated by phosphorylation.

The enzyme catalyses alpha-D-glucosamine 1-phosphate = D-glucosamine 6-phosphate. Its function is as follows. Catalyzes the conversion of glucosamine-6-phosphate to glucosamine-1-phosphate. The sequence is that of Phosphoglucosamine mutase from Clostridium novyi (strain NT).